We begin with the raw amino-acid sequence, 307 residues long: Aspartate carbamoyltransferase catalytic subunit (307 aa).

Residues R54 and T55 each contribute to the carbamoyl phosphate site. Position 83 (K83) interacts with L-aspartate. Residues R104, H132, and Q135 each contribute to the carbamoyl phosphate site. Residues R165 and R228 each coordinate L-aspartate. Carbamoyl phosphate contacts are provided by L267 and P268.

It belongs to the aspartate/ornithine carbamoyltransferase superfamily. ATCase family. As to quaternary structure, heterododecamer (2C3:3R2) of six catalytic PyrB chains organized as two trimers (C3), and six regulatory PyrI chains organized as three dimers (R2).

It catalyses the reaction carbamoyl phosphate + L-aspartate = N-carbamoyl-L-aspartate + phosphate + H(+). Its pathway is pyrimidine metabolism; UMP biosynthesis via de novo pathway; (S)-dihydroorotate from bicarbonate: step 2/3. In terms of biological role, catalyzes the condensation of carbamoyl phosphate and aspartate to form carbamoyl aspartate and inorganic phosphate, the committed step in the de novo pyrimidine nucleotide biosynthesis pathway. The sequence is that of Aspartate carbamoyltransferase catalytic subunit from Clostridium acetobutylicum (strain ATCC 824 / DSM 792 / JCM 1419 / IAM 19013 / LMG 5710 / NBRC 13948 / NRRL B-527 / VKM B-1787 / 2291 / W).